The sequence spans 210 residues: Large ribosomal subunit protein bL25 (210 aa).

The interval 185 to 210 is disordered; the sequence is APEPAGQPEVPPEPAEEAKAKTIEKE. Positions 200-210 are enriched in basic and acidic residues; it reads EEAKAKTIEKE.

Belongs to the bacterial ribosomal protein bL25 family. CTC subfamily. Part of the 50S ribosomal subunit; part of the 5S rRNA/L5/L18/L25 subcomplex. Contacts the 5S rRNA. Binds to the 5S rRNA independently of L5 and L18.

Its function is as follows. This is one of the proteins that binds to the 5S RNA in the ribosome where it forms part of the central protuberance. In Desulforamulus reducens (strain ATCC BAA-1160 / DSM 100696 / MI-1) (Desulfotomaculum reducens), this protein is Large ribosomal subunit protein bL25.